We begin with the raw amino-acid sequence, 141 residues long: Auxin-responsive protein SAUR64 (141 aa).

The protein belongs to the ARG7 family.

It is found in the cell membrane. Functionally, may promote auxin-stimulated organ elongation, such as hypocotyls, stamen filaments and petals. The sequence is that of Auxin-responsive protein SAUR64 from Arabidopsis thaliana (Mouse-ear cress).